We begin with the raw amino-acid sequence, 635 residues long: S-type anion channel SLAH3 (635 aa).

Residues 1–253 (MEEKPNYVIQ…IVLPNDKKWP (253 aa)) are Cytoplasmic-facing. The span at 102–121 (SDPTTSLSSENHKNSGSTGK) shows a compositional bias: polar residues. Residues 102-173 (SDPTTSLSSE…SGHHQNQNQA (72 aa)) form a disordered region. A compositionally biased stretch (basic residues) spans 153 to 165 (NHHHHLHRQHQSG). Ser189 carries the post-translational modification Phosphoserine. Residues 193 to 217 (ERQFTRKPASVEPEAPNRNNQNLNT) form a disordered region. A helical transmembrane segment spans residues 254–276 (FLLRYPISTFGMCLGVSSQAIMW). Topologically, residues 277–299 (KTLATAEPTKFLHVPLWINQGLW) are extracellular. Residues 300 to 320 (FISVALILTIATIYLLKIILF) traverse the membrane as a helical segment. Over 321-335 (FEAVRREYYHPIRIN) the chain is Cytoplasmic. Residues 336–356 (FFFAPFISLLFLALGVPPSII) traverse the membrane as a helical segment. Over 357–358 (TD) the chain is Extracellular. The chain crosses the membrane as a helical span at residues 359-379 (LPHFLWYLLMFPFICLELKIY). Over 380–396 (GQWMSGGQRRLSRVANP) the chain is Cytoplasmic. The chain crosses the membrane as a helical span at residues 397–417 (TNHLSVVGNFVGALLGASMGL). At 418-419 (RE) the chain is on the extracellular side. The helical transmembrane segment at 420 to 440 (GPIFFYAVGMAHYLVLFVTLY) threads the bilayer. Topologically, residues 441–455 (QRLPTNETLPKDLHP) are cytoplasmic. A helical transmembrane segment spans residues 456–476 (VFFLFVAAPSVASMAWAKVTG). A topological domain (extracellular) is located at residue Ser477. A helical transmembrane segment spans residues 478–498 (FDYGSKVCYFIAIFLYFSLAV). The Cytoplasmic segment spans residues 499-504 (RINFFR). The helical transmembrane segment at 505-525 (GIKFSLSWWAYTFPMTGAAIA) threads the bilayer. The Extracellular segment spans residues 526–541 (TIRYATVVKSTMTQIM). A helical transmembrane segment spans residues 542–562 (CVVLCAIATLVVFALLVTTII). The Cytoplasmic segment spans residues 563–635 (HAFVLRDLFP…NGKTQESDSS (73 aa)). The interval 611–635 (FTDSDSSQSNDVEACNGKTQESDSS) is disordered. Residues 614–635 (SDSSQSNDVEACNGKTQESDSS) show a composition bias toward polar residues.

It belongs to the SLAC1 S-type anion channel family. In terms of assembly, homotrimer. Interacts with KAT1. Expressed in the whole plant, escpecially in vascular systems.

It localises to the cell membrane. Its function is as follows. Slow, weak voltage-dependent S-type anion efflux channel involved in maintenance of anion homeostasis. Binds to the highly selective inward-rectifying potassium channel KAT1 and inhibits its activity. Functions as an essential negative regulator of inward potassium channels in guard cells. Essential for the efficient stomatal closure and opening in guard cells. In Arabidopsis thaliana (Mouse-ear cress), this protein is S-type anion channel SLAH3 (SLAH3).